A 498-amino-acid chain; its full sequence is NADPH:adrenodoxin oxidoreductase, mitochondrial (498 aa).

Residues 1-37 constitute a mitochondrion transit peptide; the sequence is MSTHKAALCKVQILKLFLISARCVRITRFYGVCGLST. FAD-binding residues include Ala-54, Glu-75, Leu-83, and Val-119. Residues 190-193, 234-235, and Glu-246 contribute to the NADP(+) site; these read QGNV and RR. FAD-binding positions include Trp-404 and 411-413; that span reads GVI. Residue Gly-411 participates in NADP(+) binding. Residues 469–488 show a composition bias toward basic and acidic residues; it reads DSEETRRGETRGKPREKMLD. Residues 469-489 are disordered; sequence DSEETRRGETRGKPREKMLDV.

This sequence belongs to the ferredoxin--NADP reductase type 1 family. FAD is required as a cofactor.

It localises to the mitochondrion inner membrane. It catalyses the reaction 2 reduced [adrenodoxin] + NADP(+) + H(+) = 2 oxidized [adrenodoxin] + NADPH. The protein operates within steroid metabolism; cholesterol metabolism. Serves as the first electron transfer protein in all the mitochondrial P450 systems including cholesterol side chain cleavage in all steroidogenic tissues, steroid 11-beta hydroxylation in the adrenal cortex, 25-OH-vitamin D3-24 hydroxylation in the kidney, and sterol C-27 hydroxylation in the liver. This Salvelinus fontinalis (Brook trout) protein is NADPH:adrenodoxin oxidoreductase, mitochondrial (fdxr).